A 166-amino-acid chain; its full sequence is Salivary acidic proline-rich phosphoprotein 1/2 (166 aa).

The first 16 residues, 1–16 (MLLILLSVALLAFSSA), serve as a signal peptide directing secretion. A disordered region spans residues 16–166 (AQDLDEDVSQ…QGPPQGQSPQ (151 aa)). The residue at position 17 (glutamine 17) is a Pyrrolidone carboxylic acid. The interval 17 to 46 (QDLDEDVSQEDVPLVISDGGDSEQFIDEER) is inhibits hydroxyapatite formation, binds to hydroxyapatite and calcium. Serine 24 carries the post-translational modification Phosphoserine; by FAM20C. Phosphoserine; alternate is present on serine 33. 2 O-linked (GlcA) serine; alternate glycosylation sites follow: serine 33 and serine 38. Serine 38 carries the phosphoserine; by FAM20C; alternate modification. 2 stretches are compositionally biased toward low complexity: residues 48-61 (GPPL…PSAG) and 68-82 (GPQQ…QQQQ). 2 stretches are compositionally biased toward pro residues: residues 83-111 (GPPP…PQGP) and 137-159 (GPPP…PQGP).

Post-translationally, proteolytically cleaved; PRP-2, PRP-1, PIF-S and Db-S yield PRP-4, PRP-3 (protein A), PIF-F and Db-F, respectively. A hexuronic acid was shown to be linked to Ser-33 in about 40% of the polypeptides. Neither the structure of the carbohydrate (whether glucuronic acid or an isomer of), nor the linkage (whether a glycoside or an ester) has been definitely established.

It is found in the secreted. Functionally, PRP's act as highly potent inhibitors of crystal growth of calcium phosphates. They provide a protective and reparative environment for dental enamel which is important for the integrity of the teeth. The polypeptide is Salivary acidic proline-rich phosphoprotein 1/2 (PRH1) (Homo sapiens (Human)).